A 183-amino-acid polypeptide reads, in one-letter code: ATP-dependent protease subunit HslV (183 aa).

The active site involves Thr-13. Na(+) contacts are provided by Gly-168, Cys-171, and Thr-174.

This sequence belongs to the peptidase T1B family. HslV subfamily. As to quaternary structure, a double ring-shaped homohexamer of HslV is capped on each side by a ring-shaped HslU homohexamer. The assembly of the HslU/HslV complex is dependent on binding of ATP.

It is found in the cytoplasm. The catalysed reaction is ATP-dependent cleavage of peptide bonds with broad specificity.. With respect to regulation, allosterically activated by HslU binding. Protease subunit of a proteasome-like degradation complex believed to be a general protein degrading machinery. In Xanthomonas oryzae pv. oryzae (strain MAFF 311018), this protein is ATP-dependent protease subunit HslV.